We begin with the raw amino-acid sequence, 159 residues long: Transcription elongation factor GreA (159 aa).

Positions 2–77 (EENKEFLLTQ…LENMVRKAVI (76 aa)) form a coiled coil.

It belongs to the GreA/GreB family.

Functionally, necessary for efficient RNA polymerase transcription elongation past template-encoded arresting sites. The arresting sites in DNA have the property of trapping a certain fraction of elongating RNA polymerases that pass through, resulting in locked ternary complexes. Cleavage of the nascent transcript by cleavage factors such as GreA or GreB allows the resumption of elongation from the new 3'terminus. GreA releases sequences of 2 to 3 nucleotides. In Clostridioides difficile (strain 630) (Peptoclostridium difficile), this protein is Transcription elongation factor GreA.